The chain runs to 427 residues: Ectonucleoside triphosphate diphosphohydrolase 5 (427 aa).

The first 24 residues, 1–24, serve as a signal peptide directing secretion; the sequence is MATSWGAVFMLIIACVGSTVFYRE. The active-site Proton acceptor is glutamate 171. A glycan (N-linked (GlcNAc...) asparagine) is linked at asparagine 231. 2 cysteine pairs are disulfide-bonded: cysteine 271-cysteine 302 and cysteine 362-cysteine 376.

It belongs to the GDA1/CD39 NTPase family. As to quaternary structure, monomer; active form. Homodimer; disulfide-linked. Homodimers are enzymatically inactive. The cofactor is Ca(2+). Mg(2+) serves as cofactor. Post-translationally, N-glycosylated; high-mannose type. As to expression, ubiquitous.

It is found in the endoplasmic reticulum. The protein localises to the secreted. The catalysed reaction is a ribonucleoside 5'-diphosphate + H2O = a ribonucleoside 5'-phosphate + phosphate + H(+). It catalyses the reaction GDP + H2O = GMP + phosphate + H(+). The enzyme catalyses UDP + H2O = UMP + phosphate + H(+). It carries out the reaction IDP + H2O = IMP + phosphate + H(+). The catalysed reaction is CDP + H2O = CMP + phosphate + H(+). It catalyses the reaction ADP + H2O = AMP + phosphate + H(+). The protein operates within protein modification; protein glycosylation. Functionally, hydrolyzes nucleoside diphosphates with a preference for GDP, IDP and UDP compared to ADP and CDP. In the lumen of the endoplasmic reticulum, hydrolyzes UDP that acts as an end-product feedback inhibitor of the UDP-Glc:glycoprotein glucosyltransferases. UMP can be transported back by an UDP-sugar antiporter to the cytosol where it is consumed to regenerate UDP-glucose. Therefore, it positively regulates protein reglucosylation by clearing UDP from the ER lumen and by promoting the regeneration of UDP-glucose. Protein reglucosylation is essential to proper glycoprotein folding and quality control in the ER. The protein is Ectonucleoside triphosphate diphosphohydrolase 5 (Entpd5) of Mus musculus (Mouse).